A 443-amino-acid chain; its full sequence is MKTVVWQSLSENQQESLLQRPAITEGANITAIVADVVADVRQRGDEALLELTEKFDRVRPDSIRVSEQEVTAATSRLSDNMKQALQQAYQNIATFHKAQKTKPLRVETQPGVVCEQVTRPINSVGLYIPGGSAPLPSTVLMLGVPAQIAGCRQVVLCSPPPIADEILYVAQLCGITEIYNIGGSQAIAAMAYGTKSVARVDKIFGPGNAFVTEAKRQVSNDFRGAAIDMPAGPSEVLVIADKTADPDFIAADLLSQAEHGPDSQVILLTPEPSIADRVADAIQLQLKVLPRADIARQALGSSILIVTETISQCISISNHYGPEHLIVQTREPRELVPLLDNAGSIFLGDWSPESVGDYASGTNHVLPTYGYTRTYSSLGLADFSKRMTVQELTADGLKILAPTVVTMAEAEGLDAHKRAVTIRIEKLQQQEILKAQQVEEKEA.

NAD(+)-binding residues include tyrosine 127, glutamine 185, and asparagine 208. Serine 234, glutamine 256, and histidine 259 together coordinate substrate. 2 residues coordinate Zn(2+): glutamine 256 and histidine 259. Active-site proton acceptor residues include glutamate 323 and histidine 324. Substrate is bound by residues histidine 324, aspartate 357, glutamate 411, and histidine 416. Residue aspartate 357 coordinates Zn(2+). Residue histidine 416 coordinates Zn(2+).

It belongs to the histidinol dehydrogenase family. It depends on Zn(2+) as a cofactor.

The enzyme catalyses L-histidinol + 2 NAD(+) + H2O = L-histidine + 2 NADH + 3 H(+). It participates in amino-acid biosynthesis; L-histidine biosynthesis; L-histidine from 5-phospho-alpha-D-ribose 1-diphosphate: step 9/9. In terms of biological role, catalyzes the sequential NAD-dependent oxidations of L-histidinol to L-histidinaldehyde and then to L-histidine. The protein is Histidinol dehydrogenase of Photobacterium profundum (strain SS9).